The following is a 398-amino-acid chain: O-methyltransferase penC (398 aa).

Asp263 lines the S-adenosyl-L-methionine pocket. The active-site Proton acceptor is the His305.

It belongs to the class I-like SAM-binding methyltransferase superfamily. Cation-independent O-methyltransferase family.

The protein operates within secondary metabolite biosynthesis. It participates in alkaloid biosynthesis. It functions in the pathway mycotoxin biosynthesis. O-methyltransferase; part of the gene cluster that mediates the biosynthesis of penigequinolones, potent insecticidal alkaloids that contain a highly modified 10-carbon prenyl group. The first stage is catalyzed by the nonribosomal peptide synthetase penN that condenses anthranilic acid and O-methyl-L-tyrosine to produce 4'-methoxycyclopeptin. 4'-methoxycyclopeptin is then converted to 4'-methoxydehydrocyclopeptin by the ketoglutarate-dependent dioxygenase penM through dehydrogenation to form a double bond between C-alpha and C-beta of the O-methyltyrosine side chain. PenM also converts its first product methoxydehydrocyclopeptin to 4'-methoxycyclopenin. The following conversion of 4'methoxycyclopenin into 4'-methoxyviridicatin is catalyzed by the cyclopenase penL. 4'-methoxyviridicatin is the precursor of quinolone natural products, and is further converted to quinolinone B. The prenyltransferase penI then catalyzes the canonical Friedel-Crafts alkylation of quinolinone B with dimethylallyl cation to yield dimethylallyl quinolone, which is subjected to FAD-dependent dehydrogenation by the FAD-linked oxidoreductase penH to yield conjugated aryl diene. The delta(3') double bond then serves as the site of the second alkylation with DMAPP catalyzed by the prenyltransferase penG to yield a carbenium ion intermediate, which can be attacked by H(2)O to yield a styrenyl quinolone containing a C3'-hydroxyprenyl chain, or undergo cyclization to yield yaequinolones J1 and J2. The conversion of the styrenyl quinolone into the tetrahydrofuran-containing yaequinolone C is performed by the FAD-dependent monooxygenase penE and involves epoxidation of the terminal C7'-C8' olefin, followed by epoxide ring opening initiated by the C3' hydroxyl group. The predicted cysteine hydrolase penJ acts as an epoxide hydrolase that enhances the rate of the 5-exo-tet cyclization step, increasing the yield of yaequinolone C. PenF catalyzes the cationic rearrangement of the epoxide formed by penE (before ring opening to produce yaequinolone C) into yaequinolone D. Finally, the short-chain dehydrogenase/reductase (SDR)-like reductase penD, catalyzes both the dehydration of yaequinolone D and the reduction of the resulting oxonium to yield penigequinolone. This Penicillium thymicola protein is O-methyltransferase penC.